A 322-amino-acid chain; its full sequence is Cytochrome c biogenesis protein CcsA (322 aa).

7 helical membrane passes run 2 to 22 (LFAT…SIVI), 44 to 64 (GMIA…LSSG), 68 to 88 (LSNL…LHTI), 143 to 163 (MLLS…ILII), 226 to 246 (VISL…VWAN), 260 to 274 (TWAF…IYLH), and 289 to 309 (VASI…LLGI).

Belongs to the CcmF/CycK/Ccl1/NrfE/CcsA family. In terms of assembly, may interact with Ccs1.

The protein resides in the plastid. Its subcellular location is the chloroplast thylakoid membrane. In terms of biological role, required during biogenesis of c-type cytochromes (cytochrome c6 and cytochrome f) at the step of heme attachment. The protein is Cytochrome c biogenesis protein CcsA of Brachypodium distachyon (Purple false brome).